The chain runs to 900 residues: DNA polymerase nu (900 aa).

Basic and acidic residues predominate over residues 60-75; it reads LEDRKTQSPEKKDLKS. Disordered stretches follow at residues 60–90 and 863–900; these read LEDR…LSPQ and GPPP…SFCL. Polar residues predominate over residues 76–90; sequence LRSQTSRGSAKLSPQ.

It belongs to the DNA polymerase type-A family. As to quaternary structure, interacts with FANCD2, FANCI, PCNA, RAD51 and HELQ. As to expression, highly expressed in testis and heart. Weakly expressed in skeletal muscle.

It localises to the nucleus. It carries out the reaction DNA(n) + a 2'-deoxyribonucleoside 5'-triphosphate = DNA(n+1) + diphosphate. Its activity is regulated as follows. Inhibited by ddTTP. In terms of biological role, DNA polymerase with very low fidelity that catalyzes considerable misincorporation by inserting dTTP opposite a G template, and dGTP opposite a T template. Is the least accurate of the DNA polymerase A family (i.e. POLG, POLN and POLQ). Can perform accurate translesion DNA synthesis (TLS) past a 5S-thymine glycol. Can perform efficient strand displacement past a nick or a gap and gives rise to an amount of product similar to that on non-damaged template. Has no exonuclease activity. Error-prone DNA polymerase that preferentially misincorporates dT regardless of template sequence. May play a role in TLS during interstrand cross-link (ICL) repair. May be involved in TLS when genomic replication is blocked by extremely large major groove DNA lesions. May function in the bypass of some DNA-protein and DNA-DNA cross-links. May have a role in cellular tolerance to DNA cross-linking agents. Involved in the repair of DNA cross-links and double-strand break (DSB) resistance. Participates in FANCD2-mediated repair. Forms a complex with HELQ helicase that participates in homologous recombination (HR) repair and is essential for cellular protection against DNA cross-links. This chain is DNA polymerase nu (POLN), found in Homo sapiens (Human).